The primary structure comprises 901 residues: Protein translocase subunit SecA (901 aa).

ATP is bound by residues Q87, 105–109 (GEGKT), and D512. The tract at residues 852–901 (AQMQQLSHQSDDEAAAQDLAAQTGERKVGRNDPCPCGSGKKYKQCHGRLS) is disordered. Zn(2+)-binding residues include C885, C887, C896, and H897. A compositionally biased stretch (basic residues) spans 891–901 (KKYKQCHGRLS).

The protein belongs to the SecA family. In terms of assembly, monomer and homodimer. Part of the essential Sec protein translocation apparatus which comprises SecA, SecYEG and auxiliary proteins SecDF-YajC and YidC. It depends on Zn(2+) as a cofactor.

The protein localises to the cell inner membrane. It localises to the cytoplasm. The enzyme catalyses ATP + H2O + cellular proteinSide 1 = ADP + phosphate + cellular proteinSide 2.. Part of the Sec protein translocase complex. Interacts with the SecYEG preprotein conducting channel. Has a central role in coupling the hydrolysis of ATP to the transfer of proteins into and across the cell membrane, serving both as a receptor for the preprotein-SecB complex and as an ATP-driven molecular motor driving the stepwise translocation of polypeptide chains across the membrane. The chain is Protein translocase subunit SecA from Klebsiella pneumoniae subsp. pneumoniae (strain ATCC 700721 / MGH 78578).